The primary structure comprises 211 residues: SsrA-binding protein (211 aa).

The segment at 168-211 (KHRLRRPRAQRNTQRSVTPRRTRENKNVRGSKARSARRNVRREN) is disordered. Positions 177-186 (QRNTQRSVTP) are enriched in polar residues. Over residues 196–211 (RGSKARSARRNVRREN) the composition is skewed to basic residues.

The protein belongs to the SmpB family.

Its subcellular location is the cytoplasm. In terms of biological role, required for rescue of stalled ribosomes mediated by trans-translation. Binds to transfer-messenger RNA (tmRNA), required for stable association of tmRNA with ribosomes. tmRNA and SmpB together mimic tRNA shape, replacing the anticodon stem-loop with SmpB. tmRNA is encoded by the ssrA gene; the 2 termini fold to resemble tRNA(Ala) and it encodes a 'tag peptide', a short internal open reading frame. During trans-translation Ala-aminoacylated tmRNA acts like a tRNA, entering the A-site of stalled ribosomes, displacing the stalled mRNA. The ribosome then switches to translate the ORF on the tmRNA; the nascent peptide is terminated with the 'tag peptide' encoded by the tmRNA and targeted for degradation. The ribosome is freed to recommence translation, which seems to be the essential function of trans-translation. This is SsrA-binding protein from Tropheryma whipplei (strain Twist) (Whipple's bacillus).